The primary structure comprises 765 residues: MFSKFTSILQHAVEALAPSLPLQEDFVYHWKAITHYYIETSDDKAPVTDTNIPSHLEQMLDILVQEENERESGETGPCMEYLLHHKILETLYTLGKADCPPGMKQQVLVFYTKLLGRIRQPLLPHINVHRPVQKLIRLCGEVLATPTENEEIQFLCIVCAKLKQDPYLVNFFLENKMKSLASKGVPNVISEDTLKGQDSLSTDTGQSRQPEELSGATGMEQTELEDEPPHQMDHLSTSLDNLSVTSLPEASVVCPNQDYNLVNSLLNLTRSPDGRIAVKACEGLMLLVSLPEPAAAKCLTQSTCLCELLTDRLASLYKALPQSVDPLDIETVEAINWGLDSYSHKEDASAFPGKRALISFLSWFDYCDQLIKEAQKTAAVALAKAVHERFFIGVMEPQLMQTSEMGILTSTALLHRIVRQVTSDVLLQEMVFFILGEQREPETLAEISRHPLRHRLIEHCDHISDEISIMTLRMFEHLLQKPNEHILYNLVLRNLEERNYTEYKPLCPEDKDVVENGLIAGAVDLEEDPLFTDISPENTLPNQEWLSSSPPATPDHPKNDGKTEVHKIVNSFLCLVPDDAKSSYHVEGTGYDTYLRDAHRQFRDYCAICLRWEWPGSPKALEKCNLEAAFFEGHFLKVLFDRMGRILDQPYDVNLQVTSVLSRLSLFPHPHIHEYLLDPYVNLAPGCRSLFSVIVRVVGDLMLRIQRIQDFTPKLLLVRKRLLGLEPEGPIIDHITLLEGVIVLEEFCKELAAIAFVKYHASSTP.

Disordered regions lie at residues 193–236 and 532–561; these read TLKG…DHLS and TDISPENTLPNQEWLSSSPPATPDHPKNDG. 2 stretches are compositionally biased toward polar residues: residues 196 to 208 and 535 to 550; these read GQDSLSTDTGQSR and SPENTLPNQEWLSSSP.

This sequence belongs to the FHIP family. In terms of tissue distribution, expressed in all tissues tested, highly expressed brain. As to expression, only detected at high levels in testis.

Required for proper functioning of the nervous system. This chain is FHF complex subunit HOOK interacting protein 2A, found in Homo sapiens (Human).